We begin with the raw amino-acid sequence, 318 residues long: MINIVVLGSMNTDLVMRTKICPSGGETIHGEPDGFSTGNGGKGANQAVAVARLSNPADTKVSMLGCVGDDAFGVEMLSGLKKDGVNVDNVKKIENKSTGVAMIIVEETGENRILLSEGANGNVDTAFVKAMEQRISTCNLLIMQLEIPLEAVEIALQIAHKHGVDVLMNPAPAIPLSHDMISYCAYLVPNEHEAAILLNQADSPATLENVDAYASKLLSFGVRKAVIITLGSQGAYYKSANGESALVSACKVKAVDTTAAGDTFIGAFSNSIAHGQPLKDSLEFAAKCSAITVQRKGAASSIPSLLEVDGSFNLKKNT.

Substrate contacts are provided by residues Asn-11 to Asp-13, Gly-41 to Asn-45, and Glu-146. Residues Asn-190 and Thr-229–Gly-234 each bind ATP. The K(+) site is built by Asp-256 and Thr-258. Gly-261–Asp-262 serves as a coordination point for ATP. Substrate is bound at residue Asp-262. The Proton acceptor role is filled by Asp-262. K(+) is bound by residues Thr-292, Arg-295, Gly-297, and Ser-301.

It belongs to the carbohydrate kinase PfkB family. Ribokinase subfamily. Homodimer. Mg(2+) serves as cofactor.

It localises to the cytoplasm. The protein resides in the nucleus. The catalysed reaction is D-ribose + ATP = D-ribose 5-phosphate + ADP + H(+). Its pathway is carbohydrate metabolism; D-ribose degradation; D-ribose 5-phosphate from beta-D-ribopyranose: step 2/2. With respect to regulation, activated by a monovalent cation that binds near, but not in, the active site. The most likely occupant of the site in vivo is potassium. Ion binding induces a conformational change that may alter substrate affinity. Its function is as follows. Catalyzes the phosphorylation of ribose at O-5 in a reaction requiring ATP and magnesium. The resulting D-ribose-5-phosphate can then be used either for sythesis of nucleotides, histidine, and tryptophan, or as a component of the pentose phosphate pathway. In Schizosaccharomyces pombe (strain 972 / ATCC 24843) (Fission yeast), this protein is Ribokinase.